The primary structure comprises 627 residues: 1-deoxy-D-xylulose-5-phosphate synthase (627 aa).

Thiamine diphosphate-binding positions include His-76 and 117–119; that span reads SHA. Residue Asp-148 coordinates Mg(2+). Residues 149 to 150, Asn-178, Phe-288, and Glu-370 contribute to the thiamine diphosphate site; that span reads GA. Asn-178 is a Mg(2+) binding site.

This sequence belongs to the transketolase family. DXPS subfamily. As to quaternary structure, homodimer. It depends on Mg(2+) as a cofactor. The cofactor is thiamine diphosphate.

The enzyme catalyses D-glyceraldehyde 3-phosphate + pyruvate + H(+) = 1-deoxy-D-xylulose 5-phosphate + CO2. It functions in the pathway metabolic intermediate biosynthesis; 1-deoxy-D-xylulose 5-phosphate biosynthesis; 1-deoxy-D-xylulose 5-phosphate from D-glyceraldehyde 3-phosphate and pyruvate: step 1/1. Its function is as follows. Catalyzes the acyloin condensation reaction between C atoms 2 and 3 of pyruvate and glyceraldehyde 3-phosphate to yield 1-deoxy-D-xylulose-5-phosphate (DXP). This chain is 1-deoxy-D-xylulose-5-phosphate synthase, found in Cutibacterium acnes (strain DSM 16379 / KPA171202) (Propionibacterium acnes).